Here is a 352-residue protein sequence, read N- to C-terminus: Enhancer of mRNA-decapping protein 1 (352 aa).

2 disordered regions span residues 1-258 (MMAH…PRNH) and 277-352 (QYPQ…SSKS). A compositionally biased stretch (low complexity) spans 71–80 (HTSSNTSNNK). 2 stretches are compositionally biased toward polar residues: residues 93-104 (NFGNESSHQNGG) and 205-225 (TEPNYHVNPQVNTPPQHSVNV). Positions 289 to 309 (GGVYPMVAPQYQQQPQQHPQQ) are enriched in low complexity.

The protein belongs to the EDC family.

It localises to the cytoplasm. In terms of biological role, mRNA-binding protein which stimulates mRNA decapping. The polypeptide is Enhancer of mRNA-decapping protein 1 (EDC1) (Debaryomyces hansenii (strain ATCC 36239 / CBS 767 / BCRC 21394 / JCM 1990 / NBRC 0083 / IGC 2968) (Yeast)).